We begin with the raw amino-acid sequence, 395 residues long: 1-deoxy-D-xylulose 5-phosphate reductoisomerase (395 aa).

NADPH-binding residues include T10, G11, S12, I13, R37, Q38, and N124. Residue K125 coordinates 1-deoxy-D-xylulose 5-phosphate. Residue E126 coordinates NADPH. Position 150 (D150) interacts with Mn(2+). Residues S151, E152, S179, and H202 each coordinate 1-deoxy-D-xylulose 5-phosphate. E152 serves as a coordination point for Mn(2+). G208 lines the NADPH pocket. S215, N220, K221, and E224 together coordinate 1-deoxy-D-xylulose 5-phosphate. E224 lines the Mn(2+) pocket.

This sequence belongs to the DXR family. The cofactor is Mg(2+). Mn(2+) serves as cofactor.

It carries out the reaction 2-C-methyl-D-erythritol 4-phosphate + NADP(+) = 1-deoxy-D-xylulose 5-phosphate + NADPH + H(+). It participates in isoprenoid biosynthesis; isopentenyl diphosphate biosynthesis via DXP pathway; isopentenyl diphosphate from 1-deoxy-D-xylulose 5-phosphate: step 1/6. In terms of biological role, catalyzes the NADPH-dependent rearrangement and reduction of 1-deoxy-D-xylulose-5-phosphate (DXP) to 2-C-methyl-D-erythritol 4-phosphate (MEP). This Cupriavidus pinatubonensis (strain JMP 134 / LMG 1197) (Cupriavidus necator (strain JMP 134)) protein is 1-deoxy-D-xylulose 5-phosphate reductoisomerase.